The primary structure comprises 666 residues: Transketolase (666 aa).

Histidine 28 is a binding site for substrate. Residues histidine 68 and 116-118 (GPL) each bind thiamine diphosphate. Aspartate 157 provides a ligand contact to Mg(2+). Glycine 158 and asparagine 187 together coordinate thiamine diphosphate. The Mg(2+) site is built by asparagine 187 and isoleucine 189. Histidine 262, arginine 356, and serine 383 together coordinate substrate. A thiamine diphosphate-binding site is contributed by histidine 262. Glutamate 410 (proton donor) is an active-site residue. Phenylalanine 436 contacts thiamine diphosphate. The substrate site is built by histidine 460, aspartate 468, and arginine 519.

The protein belongs to the transketolase family. In terms of assembly, homodimer. Requires Mg(2+) as cofactor. It depends on Ca(2+) as a cofactor. The cofactor is Mn(2+). Co(2+) is required as a cofactor. Thiamine diphosphate serves as cofactor.

It carries out the reaction D-sedoheptulose 7-phosphate + D-glyceraldehyde 3-phosphate = aldehydo-D-ribose 5-phosphate + D-xylulose 5-phosphate. In terms of biological role, catalyzes the transfer of a two-carbon ketol group from a ketose donor to an aldose acceptor, via a covalent intermediate with the cofactor thiamine pyrophosphate. This is Transketolase (tkt) from Halalkalibacterium halodurans (strain ATCC BAA-125 / DSM 18197 / FERM 7344 / JCM 9153 / C-125) (Bacillus halodurans).